The chain runs to 448 residues: Putative vacuolar cation/proton exchanger 6 (448 aa).

Topologically, residues methionine 31–isoleucine 81 are cytoplasmic. A helical transmembrane segment spans residues valine 82–histidine 102. Residues tyrosine 103–glycine 109 are Extracellular-facing. Residues tryptophan 110 to threonine 130 traverse the membrane as a helical segment. The Cytoplasmic portion of the chain corresponds to glutamate 131 to valine 141. A helical membrane pass occupies residues glycine 142–leucine 162. The tract at residues glycine 150–valine 185 is cation selection. The Extracellular portion of the chain corresponds to lysine 163 to isoleucine 178. Residues leucine 179 to glycine 199 traverse the membrane as a helical segment. Over lysine 200–alanine 209 the chain is Cytoplasmic. The chain crosses the membrane as a helical span at residues valine 210–histidine 230. The Extracellular segment spans residues tyrosine 231–leucine 243. The helical transmembrane segment at alanine 244 to glutamine 264 threads the bilayer. Residues leucine 265–glutamate 295 lie on the Cytoplasmic side of the membrane. A helical transmembrane segment spans residues alanine 296–aspartate 316. Residues alanine 317–valine 334 lie on the Extracellular side of the membrane. The chain crosses the membrane as a helical span at residues isoleucine 335–lysine 355. The tract at residues glycine 341–alanine 376 is cation selection. The Cytoplasmic segment spans residues aspartate 356–glycine 363. A helical membrane pass occupies residues valine 364 to glycine 384. The Extracellular portion of the chain corresponds to tryptophan 385–leucine 393. The helical transmembrane segment at asparagine 394–leucine 414 threads the bilayer. Residues glutamine 415–arginine 425 lie on the Cytoplasmic side of the membrane. Residues leucine 426–histidine 446 traverse the membrane as a helical segment. Over glutamine 447 to glycine 448 the chain is Extracellular.

It belongs to the Ca(2+):cation antiporter (CaCA) (TC 2.A.19) family. Cation/proton exchanger (CAX) subfamily.

Its subcellular location is the vacuole membrane. Vacuolar cation/proton exchanger (CAX). Translocates Ca(2+) and other metal ions into vacuoles using the proton gradient formed by H(+)-ATPase and H(+)-pyrophosphatase. This chain is Putative vacuolar cation/proton exchanger 6 (CAX6), found in Arabidopsis thaliana (Mouse-ear cress).